We begin with the raw amino-acid sequence, 445 residues long: Proline--tRNA ligase (445 aa).

The protein belongs to the class-II aminoacyl-tRNA synthetase family. ProS type 2 subfamily. As to quaternary structure, homodimer.

It localises to the cytoplasm. The catalysed reaction is tRNA(Pro) + L-proline + ATP = L-prolyl-tRNA(Pro) + AMP + diphosphate. Functionally, catalyzes the attachment of proline to tRNA(Pro) in a two-step reaction: proline is first activated by ATP to form Pro-AMP and then transferred to the acceptor end of tRNA(Pro). The sequence is that of Proline--tRNA ligase from Cereibacter sphaeroides (strain ATCC 17023 / DSM 158 / JCM 6121 / CCUG 31486 / LMG 2827 / NBRC 12203 / NCIMB 8253 / ATH 2.4.1.) (Rhodobacter sphaeroides).